A 290-amino-acid polypeptide reads, in one-letter code: Endoplasmic reticulum-Golgi intermediate compartment protein 1 (290 aa).

At 1-26 the chain is on the cytoplasmic side; it reads MPFDFRRFDIYRKVPKDLTQPTYTGA. A helical transmembrane segment spans residues 27–47; sequence IISICCCLFILFLFLSELTGF. Residues 48 to 254 lie on the Lumenal side of the membrane; that stretch reads ITTEVVNELY…RRQPLYRFIT (207 aa). A glycan (N-linked (GlcNAc...) asparagine) is linked at asparagine 74. Residues 255–275 traverse the membrane as a helical segment; that stretch reads TICAIIGGTFTVAGILDSCIF. Topologically, residues 276–290 are cytoplasmic; sequence TASEAWKKIQLGKIH.

This sequence belongs to the ERGIC family. As to quaternary structure, may form a heteromeric complex composed of ERGIC1, ERGIC2 and ERGIC3. Within the complex, the interaction with ERGIC3 is direct. Interacts with ERGIC3/ERV46. Post-translationally, N-glycosylated.

The protein localises to the endoplasmic reticulum membrane. It localises to the endoplasmic reticulum-Golgi intermediate compartment membrane. The protein resides in the golgi apparatus membrane. Possible role in transport between endoplasmic reticulum and Golgi. The sequence is that of Endoplasmic reticulum-Golgi intermediate compartment protein 1 (Ergic1) from Mus musculus (Mouse).